Here is a 477-residue protein sequence, read N- to C-terminus: Glycogen synthase (477 aa).

Lys15 serves as a coordination point for ADP-alpha-D-glucose.

It belongs to the glycosyltransferase 1 family. Bacterial/plant glycogen synthase subfamily.

The catalysed reaction is [(1-&gt;4)-alpha-D-glucosyl](n) + ADP-alpha-D-glucose = [(1-&gt;4)-alpha-D-glucosyl](n+1) + ADP + H(+). It functions in the pathway glycan biosynthesis; glycogen biosynthesis. Its function is as follows. Synthesizes alpha-1,4-glucan chains using ADP-glucose. The protein is Glycogen synthase of Caldicellulosiruptor saccharolyticus (strain ATCC 43494 / DSM 8903 / Tp8T 6331).